Here is a 338-residue protein sequence, read N- to C-terminus: Tetraacyldisaccharide 4'-kinase (338 aa).

An ATP-binding site is contributed by 53–60; sequence VAGGAGKT.

Belongs to the LpxK family.

The catalysed reaction is a lipid A disaccharide + ATP = a lipid IVA + ADP + H(+). It participates in glycolipid biosynthesis; lipid IV(A) biosynthesis; lipid IV(A) from (3R)-3-hydroxytetradecanoyl-[acyl-carrier-protein] and UDP-N-acetyl-alpha-D-glucosamine: step 6/6. Its function is as follows. Transfers the gamma-phosphate of ATP to the 4'-position of a tetraacyldisaccharide 1-phosphate intermediate (termed DS-1-P) to form tetraacyldisaccharide 1,4'-bis-phosphate (lipid IVA). The sequence is that of Tetraacyldisaccharide 4'-kinase from Polaromonas sp. (strain JS666 / ATCC BAA-500).